The sequence spans 245 residues: 3-deoxy-manno-octulosonate cytidylyltransferase (245 aa).

Belongs to the KdsB family.

The protein localises to the cytoplasm. It catalyses the reaction 3-deoxy-alpha-D-manno-oct-2-ulosonate + CTP = CMP-3-deoxy-beta-D-manno-octulosonate + diphosphate. It participates in nucleotide-sugar biosynthesis; CMP-3-deoxy-D-manno-octulosonate biosynthesis; CMP-3-deoxy-D-manno-octulosonate from 3-deoxy-D-manno-octulosonate and CTP: step 1/1. Its pathway is bacterial outer membrane biogenesis; lipopolysaccharide biosynthesis. In terms of biological role, activates KDO (a required 8-carbon sugar) for incorporation into bacterial lipopolysaccharide in Gram-negative bacteria. The sequence is that of 3-deoxy-manno-octulosonate cytidylyltransferase from Rhodopseudomonas palustris (strain BisB18).